The following is a 277-amino-acid chain: Large ribosomal subunit protein uL2 (277 aa).

Residues 219 to 277 form a disordered region; it reads TVRGSVMNPNDHPHGGGEGKAPVGRKAPSTPWGKPALGLKTRNKKAKSDKLIVRRRNEK. Residues 264 to 277 show a composition bias toward basic and acidic residues; that stretch reads AKSDKLIVRRRNEK.

The protein belongs to the universal ribosomal protein uL2 family. As to quaternary structure, part of the 50S ribosomal subunit. Forms a bridge to the 30S subunit in the 70S ribosome.

In terms of biological role, one of the primary rRNA binding proteins. Required for association of the 30S and 50S subunits to form the 70S ribosome, for tRNA binding and peptide bond formation. It has been suggested to have peptidyltransferase activity; this is somewhat controversial. Makes several contacts with the 16S rRNA in the 70S ribosome. In Streptococcus pneumoniae serotype 2 (strain D39 / NCTC 7466), this protein is Large ribosomal subunit protein uL2.